Here is a 246-residue protein sequence, read N- to C-terminus: Probable ABC transporter permease protein BMEII0107 (246 aa).

Helical transmembrane passes span 12–32 (LLSF…GAVV), 63–83 (VLSG…LMGW), 94–114 (WVQF…IVTL), 122–142 (IFVI…QGVI), 172–192 (VPFI…TVVA), and 211–231 (LYYD…LGLF). The ABC transmembrane type-1 domain occupies 56–236 (IFASLRRVLS…ILGLFMDRLL (181 aa)).

Belongs to the binding-protein-dependent transport system permease family. As to quaternary structure, the complex is composed of two ATP-binding proteins (BMEII0108), two transmembrane proteins (BMEII0107) and a solute-binding protein (BMEII0109).

It is found in the cell inner membrane. Probably part of an ABC transporter complex. Probably responsible for the translocation of the substrate across the membrane. This Brucella melitensis biotype 1 (strain ATCC 23456 / CCUG 17765 / NCTC 10094 / 16M) protein is Probable ABC transporter permease protein BMEII0107.